The chain runs to 141 residues: Large ribosomal subunit protein uL11 (141 aa).

This sequence belongs to the universal ribosomal protein uL11 family. Part of the ribosomal stalk of the 50S ribosomal subunit. Interacts with L10 and the large rRNA to form the base of the stalk. L10 forms an elongated spine to which L12 dimers bind in a sequential fashion forming a multimeric L10(L12)X complex. In terms of processing, one or more lysine residues are methylated.

Forms part of the ribosomal stalk which helps the ribosome interact with GTP-bound translation factors. This Parasynechococcus marenigrum (strain WH8102) protein is Large ribosomal subunit protein uL11.